Here is a 408-residue protein sequence, read N- to C-terminus: Retron Ec48 reverse transcriptase (408 aa).

Positions glutamate 43 to valine 269 constitute a Reverse transcriptase domain. Mg(2+) is bound by residues aspartate 137, aspartate 216, and aspartate 217.

This sequence belongs to the bacterial reverse transcriptase family.

The enzyme catalyses DNA(n) + a 2'-deoxyribonucleoside 5'-triphosphate = DNA(n+1) + diphosphate. Functionally, reverse transcriptase (RT) component of antiviral defense system retron Ec48, composed of a non-coding RNA (ncRNA), this reverse transcriptase (RT) and the following membrane protein. Expression of this retron confers protection against bacteriophages lambda, T2, T4, T5 and T7. At multiplicity of infection (MOI) of 0.02 cultures grow normally when infected with lambda without collapsing, at MOI 2 cultures enter growth stasis. At MOI 3 cell membranes are permeabilized within 15 minutes of infection but do not lyse, suggesting the phage are not able to finish a replication cycle. Antiviral defense is suppressed by mutations that knockout the lambda gam expression or phage T7 gp5.9 expression; both viral genes inhibit host RecBCD. The Ec48 retron may sense the integrity of the RecBCD enzyme; when RecBCD is perturbed by viral proteins the Ec48 effector (the membrane protein) is activated, leading to abortive infection and bacterial growth arrest. Responsible for synthesis of msDNA-Ec48 (a branched molecule with RNA linked by a 2',5'-phosphodiester bond to ssDNA). The retron transcript serves as primer (from a conserved internal G residue) and template for the reaction, and codes for the RT. The sequence is that of Retron Ec48 reverse transcriptase from Escherichia coli.